Consider the following 318-residue polypeptide: tRNA-cytidine(32) 2-sulfurtransferase (318 aa).

Residues 52 to 57 (SGGKDS) carry the PP-loop motif motif. Residues Cys-127, Cys-130, and Cys-218 each contribute to the [4Fe-4S] cluster site.

The protein belongs to the TtcA family. In terms of assembly, homodimer. It depends on Mg(2+) as a cofactor. [4Fe-4S] cluster serves as cofactor.

It localises to the cytoplasm. It catalyses the reaction cytidine(32) in tRNA + S-sulfanyl-L-cysteinyl-[cysteine desulfurase] + AH2 + ATP = 2-thiocytidine(32) in tRNA + L-cysteinyl-[cysteine desulfurase] + A + AMP + diphosphate + H(+). It participates in tRNA modification. Functionally, catalyzes the ATP-dependent 2-thiolation of cytidine in position 32 of tRNA, to form 2-thiocytidine (s(2)C32). The sulfur atoms are provided by the cysteine/cysteine desulfurase (IscS) system. In Actinobacillus pleuropneumoniae serotype 3 (strain JL03), this protein is tRNA-cytidine(32) 2-sulfurtransferase.